A 654-amino-acid polypeptide reads, in one-letter code: Chaperone protein DnaK (654 aa).

Threonine 205 bears the Phosphothreonine; by autocatalysis mark. A disordered region spans residues 592-654 (ELERQMQQIG…EVEILDDKKP (63 aa)). Polar residues predominate over residues 608 to 621 (AGQSETQSTGPGSY). Positions 622-636 (QESSNQSSQHQTNNN) are enriched in low complexity.

Belongs to the heat shock protein 70 family.

Its function is as follows. Acts as a chaperone. The protein is Chaperone protein DnaK of Protochlamydia amoebophila (strain UWE25).